A 368-amino-acid polypeptide reads, in one-letter code: Histidinol-phosphate aminotransferase (368 aa).

Lysine 223 bears the N6-(pyridoxal phosphate)lysine mark.

The protein belongs to the class-II pyridoxal-phosphate-dependent aminotransferase family. Histidinol-phosphate aminotransferase subfamily. In terms of assembly, homodimer. The cofactor is pyridoxal 5'-phosphate.

The catalysed reaction is L-histidinol phosphate + 2-oxoglutarate = 3-(imidazol-4-yl)-2-oxopropyl phosphate + L-glutamate. It participates in amino-acid biosynthesis; L-histidine biosynthesis; L-histidine from 5-phospho-alpha-D-ribose 1-diphosphate: step 7/9. This is Histidinol-phosphate aminotransferase from Rhodospirillum rubrum (strain ATCC 11170 / ATH 1.1.1 / DSM 467 / LMG 4362 / NCIMB 8255 / S1).